A 511-amino-acid chain; its full sequence is Cytochrome P450 76C4 (511 aa).

The helical transmembrane segment at 3-23 (IISGQALFLLFCFISSCFLIS) threads the bilayer. Cysteine 450 serves as a coordination point for heme.

This sequence belongs to the cytochrome P450 family. Heme is required as a cofactor.

The protein resides in the membrane. In Arabidopsis thaliana (Mouse-ear cress), this protein is Cytochrome P450 76C4 (CYP76C4).